The primary structure comprises 263 residues: 2-keto-4-pentenoate hydratase 1 (263 aa).

Belongs to the hydratase/decarboxylase family. MhpD subfamily. A divalent metal cation is required as a cofactor.

It carries out the reaction (S)-4-hydroxy-2-oxopentanoate = (2Z)-2-hydroxypenta-2,4-dienoate + H2O. It functions in the pathway aromatic compound metabolism; 3-phenylpropanoate degradation. Functionally, catalyzes the conversion of 2-hydroxypentadienoic acid (enolic form of 2-oxopent-4-enoate) to 4-hydroxy-2-ketopentanoic acid. The sequence is that of 2-keto-4-pentenoate hydratase 1 from Dechloromonas aromatica (strain RCB).